The following is a 730-amino-acid chain: Elongation factor 2 (730 aa).

Residues Thr-19–Asp-228 enclose the tr-type G domain. GTP contacts are provided by residues Ala-28–Thr-35, Asp-94–His-98, and Asn-148–Asp-151. His-596 carries the post-translational modification Diphthamide.

It belongs to the TRAFAC class translation factor GTPase superfamily. Classic translation factor GTPase family. EF-G/EF-2 subfamily.

It localises to the cytoplasm. Catalyzes the GTP-dependent ribosomal translocation step during translation elongation. During this step, the ribosome changes from the pre-translocational (PRE) to the post-translocational (POST) state as the newly formed A-site-bound peptidyl-tRNA and P-site-bound deacylated tRNA move to the P and E sites, respectively. Catalyzes the coordinated movement of the two tRNA molecules, the mRNA and conformational changes in the ribosome. This Methanosarcina barkeri (strain Fusaro / DSM 804) protein is Elongation factor 2.